Reading from the N-terminus, the 175-residue chain is Short chain dehydrogenase/reductase dpmpG (175 aa).

Residues Ile-18, Asp-71, Asn-98, and Lys-132 each contribute to the NADP(+) site.

Belongs to the short-chain dehydrogenases/reductases (SDR) family.

It functions in the pathway secondary metabolite biosynthesis; terpenoid biosynthesis. In terms of biological role, short chain dehydrogenase/reductase; part of the gene cluster that mediates the biosynthesis of diterpenoid pyrones. The first step of the pathway is the synthesis of the alpha-pyrone moiety by the polyketide synthase dpmpA via condensation of one acetyl-CoA starter unit with 3 malonyl-CoA units and 2 methylations. The alpha-pyrone is then combined with geranylgeranyl pyrophosphate (GGPP) formed by the GGPP synthase dpmpD through the action of the prenyltransferase dpmpC to yield a linear alpha-pyrone diterpenoid. Subsequent steps in the diterpenoid pyrone biosynthetic pathway involve the decalin core formation, which is initiated by the epoxidation of the C10-C11 olefin by the FAD-dependent oxidoreductase dpmpE, and is followed by a cyclization cascade catalyzed by the terpene cyclase dpmpB. The short chain dehydrogenase/reductase dpmpG then oxidizes the 8S hydroxy group to a ketone and the short chain dehydrogenase/reductase dpmpH reduces the ketone to the 8R hydroxy group to yield higginsianin B. Higginsianin B is further methylated by the methyltransferase dpmpI to produce the intermediate named FDDP B. The cytochrome P450 monooxygenase dpmpJ then oxidizes the C-26 methyl to primary alcohol, producing the final diterpenoid pyrone with a C-26 primary alcohol on the gamma-pyrone moiety named FDDP C. This Macrophomina phaseolina (strain MS6) (Charcoal rot fungus) protein is Short chain dehydrogenase/reductase dpmpG.